Reading from the N-terminus, the 153-residue chain is 6,7-dimethyl-8-ribityllumazine synthase (153 aa).

Residues Phe-22, 56 to 58 (AFE), and 80 to 82 (AVI) contribute to the 5-amino-6-(D-ribitylamino)uracil site. 85-86 (ST) provides a ligand contact to (2S)-2-hydroxy-3-oxobutyl phosphate. His-88 acts as the Proton donor in catalysis. Position 113 (Phe-113) interacts with 5-amino-6-(D-ribitylamino)uracil. Residue Arg-127 participates in (2S)-2-hydroxy-3-oxobutyl phosphate binding.

Belongs to the DMRL synthase family.

It catalyses the reaction (2S)-2-hydroxy-3-oxobutyl phosphate + 5-amino-6-(D-ribitylamino)uracil = 6,7-dimethyl-8-(1-D-ribityl)lumazine + phosphate + 2 H2O + H(+). It functions in the pathway cofactor biosynthesis; riboflavin biosynthesis; riboflavin from 2-hydroxy-3-oxobutyl phosphate and 5-amino-6-(D-ribitylamino)uracil: step 1/2. Its function is as follows. Catalyzes the formation of 6,7-dimethyl-8-ribityllumazine by condensation of 5-amino-6-(D-ribitylamino)uracil with 3,4-dihydroxy-2-butanone 4-phosphate. This is the penultimate step in the biosynthesis of riboflavin. This Clostridium novyi (strain NT) protein is 6,7-dimethyl-8-ribityllumazine synthase.